The following is a 211-amino-acid chain: Imidazole glycerol phosphate synthase subunit HisH (211 aa).

Positions 5–211 (SVALLDYGSG…QLLRNWVDSL (207 aa)) constitute a Glutamine amidotransferase type-1 domain. Cysteine 83 serves as the catalytic Nucleophile. Residues histidine 192 and glutamate 194 contribute to the active site.

Heterodimer of HisH and HisF.

Its subcellular location is the cytoplasm. It catalyses the reaction 5-[(5-phospho-1-deoxy-D-ribulos-1-ylimino)methylamino]-1-(5-phospho-beta-D-ribosyl)imidazole-4-carboxamide + L-glutamine = D-erythro-1-(imidazol-4-yl)glycerol 3-phosphate + 5-amino-1-(5-phospho-beta-D-ribosyl)imidazole-4-carboxamide + L-glutamate + H(+). The enzyme catalyses L-glutamine + H2O = L-glutamate + NH4(+). Its pathway is amino-acid biosynthesis; L-histidine biosynthesis; L-histidine from 5-phospho-alpha-D-ribose 1-diphosphate: step 5/9. In terms of biological role, IGPS catalyzes the conversion of PRFAR and glutamine to IGP, AICAR and glutamate. The HisH subunit catalyzes the hydrolysis of glutamine to glutamate and ammonia as part of the synthesis of IGP and AICAR. The resulting ammonia molecule is channeled to the active site of HisF. This is Imidazole glycerol phosphate synthase subunit HisH from Nocardia farcinica (strain IFM 10152).